Here is a 303-residue protein sequence, read N- to C-terminus: MSKDLVHPSLIRAGIVELEMAEETTDLINRTIESNQAHLQGEPLYVDSLPEDMSRLRIEDKSRRTKTEEEERDEGSSEEDNYLSEGQDPLIPFQNFLDEIGARAVKRLKTGEGFFRVWSALSDDIKGYVSTNIMTSGERDTKSIQIQTEPTASVSSGNESRHDSESMHDPNDKKDHTPDHDVVPDIESSTDKGEIRDIEGEVAHQVAESFSKKYKFPSRSSGIFLWNFEQLKMNLDDIVKAAMNVPGVERIAEKGGKLPLRCILGFVALDSSKRFRLLADNDKVARLIQEDINSYMARLEEAE.

The Nuclear export signal signature appears at Leu49–Ile58. 2 disordered regions span residues Pro50–Gln87 and Arg139–Glu194. Residues Asp52 to Glu69 are compositionally biased toward basic and acidic residues. The span at Glu70–Tyr82 shows a compositional bias: acidic residues. The span at Ser143–Asn158 shows a compositional bias: polar residues. Positions Glu159–Glu194 are enriched in basic and acidic residues. Position 211 is a phosphoserine; by host PKC (Ser211). The Nuclear localization signal motif lies at Lys212–Lys215. Residue Ser272 is modified to Phosphoserine; by host PKC.

It belongs to the lyssavirus protein P family. Homotrimer when phosphorylated. This trimer is stabilized by binding to the L protein. Binds soluble protein N, and ribonucleocapsid. Interacts with host STAT1, STAT2 and PML. Phosphorylated by host PKC and by an unknown kinase.

It localises to the virion. Its subcellular location is the host cytoplasm. It is found in the host nucleus. Its function is as follows. Non catalytic polymerase cofactor and regulatory protein that plays a role in viral transcription and replication. Stabilizes the RNA polymerase L to the N-RNA template and binds the soluble protein N, preventing it from encapsidating non-genomic RNA. Also inhibits host IFN-alpha and IFN-beta signaling by binding and retaining phosphorylated STAT1 in the cytoplasm or by inhibiting the DNA binding of STAT1 in the nucleus. The polypeptide is Phosphoprotein (P) (Canis lupus familiaris (Dog)).